The sequence spans 426 residues: Glutamate-1-semialdehyde 2,1-aminomutase (426 aa).

At K265 the chain carries N6-(pyridoxal phosphate)lysine.

This sequence belongs to the class-III pyridoxal-phosphate-dependent aminotransferase family. HemL subfamily. In terms of assembly, homodimer. The cofactor is pyridoxal 5'-phosphate.

The protein resides in the cytoplasm. It carries out the reaction (S)-4-amino-5-oxopentanoate = 5-aminolevulinate. It participates in porphyrin-containing compound metabolism; protoporphyrin-IX biosynthesis; 5-aminolevulinate from L-glutamyl-tRNA(Glu): step 2/2. This Enterobacter sp. (strain 638) protein is Glutamate-1-semialdehyde 2,1-aminomutase.